A 466-amino-acid chain; its full sequence is Tissue alpha-L-fucosidase (466 aa).

The N-terminal stretch at 1–31 (MRAPGMRSRPAGPALLLLLLFLGAAESVRRA) is a signal peptide. Thr-170 carries the phosphothreonine modification. Residues Asn-241, Asn-268, and Asn-382 are each glycosylated (N-linked (GlcNAc...) asparagine).

It belongs to the glycosyl hydrolase 29 family. Homotetramer.

It is found in the lysosome. It carries out the reaction an alpha-L-fucoside + H2O = L-fucose + an alcohol. The catalysed reaction is a neolactoside IV(2)-alpha-Fuc-nLc4Cer(d18:1(4E)) + H2O = a neolactoside nLc4Cer(d18:1(4E)) + L-fucose. The enzyme catalyses a neolactoside IV(2)-alpha-Fuc-nLc4Cer(d18:0) + H2O = a neolactoside nLc4Cer(d18:0) + L-fucose. Functionally, alpha-L-fucosidase is responsible for hydrolyzing the alpha-1,6-linked fucose joined to the reducing-end N-acetylglucosamine of the carbohydrate moieties of glycoproteins. This Homo sapiens (Human) protein is Tissue alpha-L-fucosidase.